The sequence spans 238 residues: Protein-lysine N-methyltransferase efm4 (238 aa).

It belongs to the class I-like SAM-binding methyltransferase superfamily. EFM4 family.

It is found in the cytoplasm. The protein resides in the nucleus. Its function is as follows. S-adenosyl-L-methionine-dependent protein-lysine N-methyltransferase that mono- and dimethylates elongation factor 1-alpha at 'Lys-316'. May play a role in intracellular transport. This Schizosaccharomyces pombe (strain 972 / ATCC 24843) (Fission yeast) protein is Protein-lysine N-methyltransferase efm4.